The primary structure comprises 259 residues: Leucine-rich repeat-containing protein 61 (259 aa).

LRR repeat units follow at residues 32–53 (SILLLKLRGLGLADLGCLGECL), 54–75 (GLEWLDLSGNALTHLGPLASLR), 76–97 (QLAVLNVSNNRLTGLEPLATCE), and 98–119 (NLQSLNAAGNLLATPGQLQCLA). Residues 138 to 178 (NPLCANPSYWAAVRELLPGLKVIDGERVIGRGSEFYQLCRD) enclose the LRRCT domain.

In Homo sapiens (Human), this protein is Leucine-rich repeat-containing protein 61 (LRRC61).